Consider the following 397-residue polypeptide: Sporulation-specific protein 20 (397 aa).

The segment at 1–26 (MGFRKILASKSHHSRHHNQHHKNLKL) is disordered. The segment at 4–50 (RKILASKSHHSRHHNQHHKNLKLQNHRYVLISNITGSHETKYLSPFR) is inhibitory region. Residues 10 to 26 (KSHHSRHHNQHHKNLKL) show a composition bias toward basic residues. Residues 51 to 95 (MDNCSGSRRRDRLHVKLKSLRNKIHKQLHPNCRFDDATKTSDDKC) are positive regulatory region. The t-SNARE coiled-coil homology domain maps to 330–392 (NQMEIDLYGN…QAKRYRLEKV (63 aa)).

This sequence belongs to the SNAP-25 family. Interacts with the t-SNARE SSO1 and the v-SNARE SNC2.

The protein localises to the cell membrane. Its subcellular location is the prospore membrane. Functionally, required to maintain the prospore membrane to the nucleus during sporulation in order to capture the daughter nuclei and form the spores. Mediates the fusion of exocytic vesicles with the plasma membrane during sporulation through its interactions with the t-SNARE SSO1 and v-SNARE SNC2. The protein is Sporulation-specific protein 20 (SPO20) of Saccharomyces cerevisiae (strain ATCC 204508 / S288c) (Baker's yeast).